The chain runs to 552 residues: 2-methyl-1,2-propanediol dehydrogenase (552 aa).

Belongs to the GMC oxidoreductase family. The cofactor is FAD.

The protein localises to the cytoplasm. The enzyme catalyses 2-methylpropane-1,2-diol + NAD(+) = 2-hydroxy-2-methylpropanal + NADH + H(+). Its function is as follows. Involved in the degradation of methyl tert-butyl ether (MTBE). Catalyzes the conversion of 2-methyl 1,2-propanediol (2-M1,2-PD) to hydroxyisobutyraldehyde. The chain is 2-methyl-1,2-propanediol dehydrogenase from Mycolicibacterium austroafricanum (Mycobacterium austroafricanum).